Reading from the N-terminus, the 519-residue chain is Alternative NAD(P)H-ubiquinone oxidoreductase C1, chloroplastic/mitochondrial (519 aa).

Residues 1–52 constitute a chloroplast and mitochondrion transit peptide; sequence MAVLSSVSSLIPFSYGATRLTSKASLASRTSGFNLSSRWNSTRNSPMLYLSR. 82–118 provides a ligand contact to FAD; it reads RVCILGGGFGGLYTALRLESLVWPEDKKPQVVLVDQS. Residue 246–282 participates in NAD(+) binding; it reads IKVAVVGCGYAGVELAATISERLQDRGIVQSINVSKN.

It belongs to the NADH dehydrogenase family. FAD serves as cofactor. As to expression, flowers, roots, leaves and stems.

It localises to the mitochondrion. The protein localises to the mitochondrion inner membrane. The protein resides in the plastid. It is found in the chloroplast. Its subcellular location is the plastoglobule. It carries out the reaction a quinone + NADH + H(+) = a quinol + NAD(+). It catalyses the reaction a ubiquinone + NADH + H(+) = a ubiquinol + NAD(+). The catalysed reaction is demethylphylloquinone + NADPH + H(+) = demethylphylloquinol + NADP(+). With respect to regulation, inhibited by dicumarol. Functionally, bifunctional oxidoreductase ables to act both on prenyl naphthoquinones and on prenyl benzoquinones. May serve a respiratory function. Involved in an electron flow toward the plastoglobule plastoquinone pool. Required for plastochromanol-8 accumulation and for phylloquinone (vitamin K1) production. Probably not directly involved in cyclic or chlororespiratory electron flows under standard growth conditions, but participates in the redox metabolism of plastoquinone-9 and the tocophrol recycling-intermediate alpha-tocopherol quinone. Catalyzes the penultimate step in the biosynthesis of vitamin K1. The chain is Alternative NAD(P)H-ubiquinone oxidoreductase C1, chloroplastic/mitochondrial from Arabidopsis thaliana (Mouse-ear cress).